The chain runs to 814 residues: DNA replication licensing factor Mcm6 (814 aa).

The C4-type zinc-finger motif lies at 152-179 (CLDCQTEIRDVEQQFKFTNPTICRNPVC). The MCM domain occupies 339–545 (LYQNLINSLF…VVDYAIARKI (207 aa)). Serine 392, threonine 393, alanine 394, lysine 395, serine 396, and asparagine 497 together coordinate ATP. Positions 521 to 524 (SRFD) match the Arginine finger motif. Positions 612 and 615 each coordinate ADP. A disordered region spans residues 656–696 (DIHLDEEEGEENENVMDIGEETPEDTPRTNETEENDQDTPA). Positions 659–679 (LDEEEGEENENVMDIGEETPE) are enriched in acidic residues.

Belongs to the MCM family. As to quaternary structure, component of the Mcm2-7 complex. The complex forms a toroidal hexameric ring with the proposed subunit order Mcm2-Mcm6-Mcm4-Mcm7-Mcm3-Mcm5 (By simililarity). The heterodimers of Mcm4/Mcm6 and Mcm3/Mcm5 interact with Mcm2 and Mcm7.

It is found in the nucleus. The enzyme catalyses ATP + H2O = ADP + phosphate + H(+). Functionally, acts as a component of the MCM2-7 complex (MCM complex) which is the replicative helicase essential for 'once per cell cycle' DNA replication initiation and elongation in eukaryotic cells. Core component of CDC45-MCM-GINS (CMG) helicase, the molecular machine that unwinds template DNA during replication, and around which the replisome is built. The active ATPase sites in the MCM2-7 ring are formed through the interaction surfaces of two neighboring subunits such that a critical structure of a conserved arginine finger motif is provided in trans relative to the ATP-binding site of the Walker A box of the adjacent subunit. The six ATPase active sites, however, are likely to contribute differentially to the complex helicase activity. The chain is DNA replication licensing factor Mcm6 from Anopheles gambiae (African malaria mosquito).